We begin with the raw amino-acid sequence, 127 residues long: Major sperm protein 38 (127 aa).

Residue alanine 2 is modified to N-acetylalanine. An MSP domain is found at 9–126 (DIQTQPGTKI…RRKNLPIEYN (118 aa)).

In terms of tissue distribution, sperm.

It localises to the cell projection. Its subcellular location is the pseudopodium. The protein resides in the cytoplasm. It is found in the cytoskeleton. Functionally, central component in molecular interactions underlying sperm crawling. Forms an extensive filament system that extends from sperm villipoda, along the leading edge of the pseudopod. The polypeptide is Major sperm protein 38 (msp-38) (Caenorhabditis elegans).